Reading from the N-terminus, the 122-residue chain is Large ribosomal subunit protein uL18 (122 aa).

The protein belongs to the universal ribosomal protein uL18 family. Part of the 50S ribosomal subunit; part of the 5S rRNA/L5/L18/L25 subcomplex. Contacts the 5S and 23S rRNAs.

This is one of the proteins that bind and probably mediate the attachment of the 5S RNA into the large ribosomal subunit, where it forms part of the central protuberance. The protein is Large ribosomal subunit protein uL18 of Desulfitobacterium hafniense (strain Y51).